The chain runs to 111 residues: Nucleoid-associated protein Cphamn1_1179 (111 aa).

Belongs to the YbaB/EbfC family. As to quaternary structure, homodimer.

The protein resides in the cytoplasm. Its subcellular location is the nucleoid. Functionally, binds to DNA and alters its conformation. May be involved in regulation of gene expression, nucleoid organization and DNA protection. The chain is Nucleoid-associated protein Cphamn1_1179 from Chlorobium phaeobacteroides (strain BS1).